The sequence spans 275 residues: Phosphonoacetaldehyde hydrolase (275 aa).

The active-site Nucleophile is D15. Mg(2+)-binding residues include D15 and A17. K56 acts as the Schiff-base intermediate with substrate in catalysis. Mg(2+) is bound at residue D189.

Belongs to the HAD-like hydrolase superfamily. PhnX family. Homodimer. Mg(2+) serves as cofactor.

It carries out the reaction phosphonoacetaldehyde + H2O = acetaldehyde + phosphate + H(+). Functionally, involved in phosphonate degradation. This is Phosphonoacetaldehyde hydrolase from Pseudomonas putida (strain W619).